We begin with the raw amino-acid sequence, 48 residues long: Large ribosomal subunit protein eL40 (48 aa).

This sequence belongs to the eukaryotic ribosomal protein eL40 family.

This is Large ribosomal subunit protein eL40 from Methanobrevibacter smithii (strain ATCC 35061 / DSM 861 / OCM 144 / PS).